A 521-amino-acid chain; its full sequence is AAA ATPase forming ring-shaped complexes (521 aa).

Residues 4–44 adopt a coiled-coil conformation; sequence TEDLAALNDRLMAKNHALAEALSRAGKELTKAKSQLAQLAQ. 235–240 is an ATP binding site; that stretch reads GNGKTM.

It belongs to the AAA ATPase family. Homohexamer. Assembles into a hexameric ring structure.

This chain is AAA ATPase forming ring-shaped complexes, found in Bifidobacterium longum (strain NCC 2705).